The following is a 96-amino-acid chain: MLKTLENLQLFAHKKGGGSTSNGRDSQAKRLGAKAADGQTVSGGSILYRQRGTHIYPGVNVGRGGDDTLFAKVEGVVRFERKGRDKKQVSVYPVAK.

Residues 1–11 constitute a propeptide that is removed on maturation; it reads MLKTLENLQLF. A disordered region spans residues 13-36; the sequence is HKKGGGSTSNGRDSQAKRLGAKAA.

The protein belongs to the bacterial ribosomal protein bL27 family. In terms of processing, the N-terminus is cleaved by ribosomal processing cysteine protease Prp.

This Streptococcus thermophilus (strain CNRZ 1066) protein is Large ribosomal subunit protein bL27.